Here is a 655-residue protein sequence, read N- to C-terminus: A-type voltage-gated potassium channel KCND3 (655 aa).

The Cytoplasmic portion of the chain corresponds to 1–182 (MAAGVAAWLP…FENPHTSTLA (182 aa)). Interaction with KCNIP1 stretches follow at residues 6–21 (AAWL…GWMP) and 70–78 (EKEFFFNED). His104, Cys110, Cys131, and Cys132 together coordinate Zn(2+). Ser153 is modified (phosphoserine). Residues 183–204 (LVFYYVTGFFIAVSVITNVVET) traverse the membrane as a helical segment. Over 205–223 (VPCGTVPGSKELPCGERYS) the chain is Extracellular. The helical transmembrane segment at 224 to 246 (VAFFCLDTACVMIFTVEYLLRLF) threads the bilayer. Residues 247 to 253 (AAPSRYR) are Cytoplasmic-facing. A helical membrane pass occupies residues 254-277 (FIRSVMSIIDVVAIMPYYIGLVMT). Residues 278–283 (NNEDVS) lie on the Extracellular side of the membrane. Residues 284-306 (GAFVTLRVFRVFRIFKFSRHSQG) form a helical; Voltage-sensor membrane-spanning segment. Over 307-318 (LRILGYTLKSCA) the chain is Cytoplasmic. Residues 319–343 (SELGFLLFSLTMAIIIFATVMFYAE) traverse the membrane as a helical segment. At 344 to 352 (KGSSASKFT) the chain is on the extracellular side. The segment at residues 353-366 (SIPASFWYTIVTMT) is an intramembrane region (helical). Thr367, Leu368, Gly369, and Tyr370 together coordinate K(+). Residues 367-372 (TLGYGD) carry the Selectivity filter motif. Residues 367 to 374 (TLGYGDMV) lie within the membrane without spanning it. Residues 378–400 (IAGKIFGSICSLSGVLVIALPVP) form a helical membrane-spanning segment. Residues 401–655 (VIVSNFSRIY…TSNVVKVSVL (255 aa)) are Cytoplasmic-facing. Thr459 is modified (phosphothreonine). The segment at 470 to 487 (SLIESQHHHLLHCLEKTT) is interaction with KCNIP1 and KCNIP2. The mediates dendritic targeting stretch occupies residues 474–489 (SQHHHLLHCLEKTTGL). Residues 523 to 565 (SSMQNYPSTRSPSLSSHSGLTTTCCSRRSKKTTHLPNSNLPAT) form a disordered region. Residues 529–548 (PSTRSPSLSSHSGLTTTCCS) are compositionally biased toward low complexity. Ser569 carries the phosphoserine; by CaMK2D modification. The residue at position 585 (Ser585) is a Phosphoserine. The tract at residues 616–647 (SIPTPPALTPEGESRPPPASPGPNTNIPSITS) is disordered. Polar residues predominate over residues 637–647 (GPNTNIPSITS).

The protein belongs to the potassium channel family. D (Shal) (TC 1.A.1.2) subfamily. Kv4.3/KCND3 sub-subfamily. As to quaternary structure, homotetramer. Heterotetramer with KCND2. Associates with the regulatory subunits KCNIP3 and KCNIP4. Interacts with KCNE1, KCNE2, SCN1B and KCNAB1 and DLG1. Component of heteromultimeric potassium channels. Identified in potassium channel complexes containing KCND1, KCND2, KCND3, KCNIP1, KCNIP2, KCNIP3, KCNIP4, DPP6 and DPP10. Interacts with KCNIP1; each KCNIP1 monomer interacts with two adjacent KCND3 subunits, through both the N-terminal inactivation ball of a KCND3 subunit and a C-terminal helix from the adjacent KCND3 subunit, clamping them together; this interaction stabilizes the tetrameric form and modulates the channel gating kinetics namely channel activation and inactivation kinetics and rate of recovery from inactivation. Interacts with DPP6; this interaction modulates the channel gating kinetics namely channel activation and inactivation kinetics and rate of recovery from inactivation. Interacts with KCNIP2; each KCNIP2 monomer interacts with two adjacent KCND3 subunits, through both the N-terminal inactivation ball of a KCND3 subunit and a C-terminal helix from the adjacent KCND3 subunit, clamping them together; this interaction modulates the channel gating kinetics. Regulated through phosphorylation at Ser-569 by CaMK2D. As to expression, highly expressed in brain, in particular in the retrosplenial cortex, medial habenula, anterior thalamus, hippocampus, cerebellum and lateral geniculate and superior colliculus. Highly expressed in heart atrium (at protein level) and throughout the ventricle wall, in lung and vas deferens.

The protein localises to the cell membrane. It is found in the sarcolemma. It localises to the cell projection. The protein resides in the dendrite. It carries out the reaction K(+)(in) = K(+)(out). Pore-forming (alpha) subunit of voltage-gated A-type potassium channels that mediates transmembrane potassium transport in excitable membranes, in brain and heart. In cardiomyocytes, may generate the transient outward potassium current I(To). In neurons, may conduct the transient subthreshold somatodendritic A-type potassium current (ISA). Kinetics properties are characterized by fast activation at subthreshold membrane potentials, rapid inactivation, and quick recovery from inactivation. Channel properties are modulated by interactions with regulatory subunits. Interaction with the regulatory subunits KCNIP1 or KCNIP2 modulates the channel gating kinetics namely channel activation and inactivation kinetics and rate of recovery from inactivation. Likewise, interaction with DPP6 modulates the channel gating kinetics namely channel activation and inactivation kinetics. The chain is A-type voltage-gated potassium channel KCND3 from Rattus norvegicus (Rat).